The chain runs to 290 residues: Phosphoribulokinase 1 (290 aa).

12-20 (GSSGAGTST) serves as a coordination point for ATP.

Belongs to the phosphoribulokinase family. In terms of assembly, homooctamer.

It catalyses the reaction D-ribulose 5-phosphate + ATP = D-ribulose 1,5-bisphosphate + ADP + H(+). It functions in the pathway carbohydrate biosynthesis; Calvin cycle. Activated by NADH and inhibited by phosphoenolpyruvate. This is Phosphoribulokinase 1 (prkA) from Cereibacter sphaeroides (Rhodobacter sphaeroides).